The primary structure comprises 445 residues: Phosphoglucosamine mutase (445 aa).

Residue Ser104 is the Phosphoserine intermediate of the active site. Residues Ser104, Asp243, Asp245, and Asp247 each coordinate Mg(2+). Ser104 carries the post-translational modification Phosphoserine.

This sequence belongs to the phosphohexose mutase family. Mg(2+) serves as cofactor. Activated by phosphorylation.

The enzyme catalyses alpha-D-glucosamine 1-phosphate = D-glucosamine 6-phosphate. In terms of biological role, catalyzes the conversion of glucosamine-6-phosphate to glucosamine-1-phosphate. This chain is Phosphoglucosamine mutase, found in Chromobacterium violaceum (strain ATCC 12472 / DSM 30191 / JCM 1249 / CCUG 213 / NBRC 12614 / NCIMB 9131 / NCTC 9757 / MK).